The following is a 216-amino-acid chain: UPF0502 protein Pfl01_3711 (216 aa).

This sequence belongs to the UPF0502 family.

This Pseudomonas fluorescens (strain Pf0-1) protein is UPF0502 protein Pfl01_3711.